A 248-amino-acid chain; its full sequence is N-acylneuraminate-9-phosphatase (248 aa).

Mg(2+) is bound at residue Asp12. Residues Leu13, Asp14, Thr131, Asn132, and Lys164 each coordinate phosphate. Asp14 serves as a coordination point for Mg(2+). Asp189 contacts Mg(2+).

The protein belongs to the HAD-like hydrolase superfamily. NANP family. Mg(2+) is required as a cofactor.

The enzyme catalyses N-acetylneuraminate 9-phosphate + H2O = N-acetylneuraminate + phosphate. The catalysed reaction is N-glycoloylneuraminate 9-phosphate + H2O = N-glycoloylneuraminate + phosphate. It functions in the pathway amino-sugar metabolism; N-acetylneuraminate biosynthesis. With respect to regulation, inhibited by calcium. Inhibited by vanadate, sodium orthovanadate and phosphonate. Catalyzes the dephosphorylation of N-acylneuraminate 9-phosphate (Neu5Ac-9-P) to N-acetylneuraminic acid (Neu5Ac or sialic acid). Can also use N-glycoloylneuraminate 9-phosphate as substrate. The sequence is that of N-acylneuraminate-9-phosphatase from Homo sapiens (Human).